Consider the following 192-residue polypeptide: dTTP/UTP pyrophosphatase (192 aa).

Aspartate 70 (proton acceptor) is an active-site residue.

The protein belongs to the Maf family. YhdE subfamily. The cofactor is a divalent metal cation.

Its subcellular location is the cytoplasm. The catalysed reaction is dTTP + H2O = dTMP + diphosphate + H(+). It carries out the reaction UTP + H2O = UMP + diphosphate + H(+). Its function is as follows. Nucleoside triphosphate pyrophosphatase that hydrolyzes dTTP and UTP. May have a dual role in cell division arrest and in preventing the incorporation of modified nucleotides into cellular nucleic acids. The polypeptide is dTTP/UTP pyrophosphatase (Alkaliphilus oremlandii (strain OhILAs) (Clostridium oremlandii (strain OhILAs))).